Consider the following 177-residue polypeptide: GTP-dependent dephospho-CoA kinase (177 aa).

D48, V49, V50, D67, K69, E124, and D147 together coordinate GTP.

It belongs to the GTP-dependent DPCK family.

The enzyme catalyses 3'-dephospho-CoA + GTP = GDP + CoA + H(+). It participates in cofactor biosynthesis; coenzyme A biosynthesis. Catalyzes the GTP-dependent phosphorylation of the 3'-hydroxyl group of dephosphocoenzyme A to form coenzyme A (CoA). This Thermococcus onnurineus (strain NA1) protein is GTP-dependent dephospho-CoA kinase.